We begin with the raw amino-acid sequence, 541 residues long: Carotenoid-cleaving dioxygenase, mitochondrial (541 aa).

4 residues coordinate Fe cation: H188, H248, H319, and H535.

Belongs to the carotenoid oxygenase family. Fe(2+) is required as a cofactor. Widely expressed. Detected in heart, spleen, lung, intestine, colon, stomach, kidney, bladder, and prostate. Highly expressed in liver and testis (at protein level).

It is found in the mitochondrion. It carries out the reaction all-trans-beta-carotene + O2 = beta-ionone + all-trans-10'-apo-beta-carotenal. The enzyme catalyses 5-cis-lycopene + O2 = 5-cis-10'-apo-lycopenal + (3E,5E)-6,10-dimethylundeca-3,5,9-trien-2-one. The catalysed reaction is 13-cis-lycopene + O2 = 13-cis-10'-apo-lycopenal + (3E,5E)-6,10-dimethylundeca-3,5,9-trien-2-one. It catalyses the reaction lutein + O2 = (3R,6R)-hydroxy-alpha-ionone + (3R)-3-hydroxy-10'-apo-beta-carotenal. It carries out the reaction lutein + O2 = (3R,6R)-3-hydroxy-10'-apo-alpha-carotenal + (3R)-hydroxy-beta-ionone. The enzyme catalyses all-trans-zeaxanthin + 2 O2 = 4,9-dimethyldodeca-2,4,6,8,10-pentaenedial + 2 (3R)-hydroxy-beta-ionone. The catalysed reaction is all-trans-zeaxanthin + O2 = (3R)-3-hydroxy-10'-apo-beta-carotenal + (3R)-hydroxy-beta-ionone. It catalyses the reaction beta-cryptoxanthin + O2 = all-trans-10'-apo-beta-carotenal + (3R)-hydroxy-beta-ionone. It carries out the reaction all-trans-10'-apo-beta-carotenal + O2 = beta-ionone + 4,9-dimethyldodeca-2,4,6,8,10-pentaenedial. The enzyme catalyses (3R)-3-hydroxy-10'-apo-beta-carotenal + O2 = 4,9-dimethyldodeca-2,4,6,8,10-pentaenedial + (3R)-hydroxy-beta-ionone. The catalysed reaction is (3R,6R)-3-hydroxy-10'-apo-alpha-carotenal + O2 = (3R,6R)-hydroxy-alpha-ionone + 4,9-dimethyldodeca-2,4,6,8,10-pentaenedial. Broad specificity mitochondrial dioxygenase that mediates the asymmetric oxidative cleavage of carotenoids. Cleaves carotenes (pure hydrocarbon carotenoids) such as all-trans-beta-carotene and lycopene as well as xanthophylls (oxygenated carotenoids) such as zeaxanthin, lutein and beta-cryptoxanthin at both the 9,10 and the 9',10' carbon-carbon double bond. Through its function in carotenoids metabolism regulates oxidative stress and the production of important signaling molecules. The protein is Carotenoid-cleaving dioxygenase, mitochondrial of Mustela putorius furo (European domestic ferret).